The sequence spans 31 residues: Cytochrome b6-f complex subunit 6 (31 aa).

The chain crosses the membrane as a helical span at residues 3-23 (LFIGYIIFLVAFFGLATGLFL).

Belongs to the PetL family. As to quaternary structure, the 4 large subunits of the cytochrome b6-f complex are cytochrome b6, subunit IV (17 kDa polypeptide, PetD), cytochrome f and the Rieske protein, while the 4 small subunits are PetG, PetL, PetM and PetN. The complex functions as a dimer.

The protein localises to the plastid. Its subcellular location is the chloroplast thylakoid membrane. In terms of biological role, component of the cytochrome b6-f complex, which mediates electron transfer between photosystem II (PSII) and photosystem I (PSI), cyclic electron flow around PSI, and state transitions. PetL is important for photoautotrophic growth as well as for electron transfer efficiency and stability of the cytochrome b6-f complex. This chain is Cytochrome b6-f complex subunit 6, found in Porphyra purpurea (Red seaweed).